A 290-amino-acid chain; its full sequence is Putative neuropeptide Y receptor type 6 (290 aa).

The Extracellular portion of the chain corresponds to 1–39 (MEVSLNHPASNTTSTKNNNSAFFYFESCQPPSPALLLLC). Asn-11 carries an N-linked (GlcNAc...) asparagine glycan. The helical transmembrane segment at 40–60 (IAYTVVLIVGLFGNLSLIIII) threads the bilayer. Over 61 to 83 (FKKQRKAQNFTSILIANLSLSDT) the chain is Cytoplasmic. Residues 84–104 (LVCVMCIHFTIIYTLMDHWIF) traverse the membrane as a helical segment. Residues 105–111 (GDTMCRL) are Extracellular-facing. A disulfide bond links Cys-109 and Cys-196. The helical transmembrane segment at 112–132 (TSYVQSVSISVSIFSLVFTAV) threads the bilayer. At 133-150 (ERYQLIVNPRGWKPSVTH) the chain is on the cytoplasmic side. The chain crosses the membrane as a helical span at residues 151-171 (AYWGITLIWLFSLLLSIPFFL). The Extracellular portion of the chain corresponds to 172 to 206 (SYHLTDEPFRNLSLPTDLYTHQVACVENWPSKKDR). A helical transmembrane segment spans residues 207–227 (LLFTTSLFLLQYFVPLGFILI). Over 228-258 (CYLKIVICLRRRNAKVDKKKENEGRLNENKR) the chain is Cytoplasmic. The chain crosses the membrane as a helical span at residues 259–279 (INTMLISIVVTFGACWLPRIS). Residues 280–290 (SMSSLTGIMRC) lie on the Extracellular side of the membrane.

This sequence belongs to the G-protein coupled receptor 1 family. Expressed in heart, skeletal muscle, gastrointestinal tissues, spleen, brain and adrenal glands.

The protein localises to the membrane. In terms of biological role, when expressed, is unable to bind pancreatic polypeptide (PP), neuropeptide Y (NPY), or peptide YY (PYY), suggesting that either it is functionally inactive or that it may have acquired a pancreatic polypeptide-independent function. The chain is Putative neuropeptide Y receptor type 6 (NPY6R) from Homo sapiens (Human).